The following is a 117-amino-acid chain: Large ribosomal subunit protein bL17 (117 aa).

This sequence belongs to the bacterial ribosomal protein bL17 family. Part of the 50S ribosomal subunit. Contacts protein L32.

The polypeptide is Large ribosomal subunit protein bL17 (Campylobacter jejuni subsp. doylei (strain ATCC BAA-1458 / RM4099 / 269.97)).